The sequence spans 833 residues: Glycerol-3-phosphate acyltransferase (833 aa).

Positions 309 to 314 (CHRSHI) match the HXXXXD motif motif.

This sequence belongs to the GPAT/DAPAT family.

It is found in the cell inner membrane. It carries out the reaction sn-glycerol 3-phosphate + an acyl-CoA = a 1-acyl-sn-glycero-3-phosphate + CoA. It participates in phospholipid metabolism; CDP-diacylglycerol biosynthesis; CDP-diacylglycerol from sn-glycerol 3-phosphate: step 1/3. The protein is Glycerol-3-phosphate acyltransferase of Pseudomonas syringae pv. syringae (strain B728a).